Here is a 383-residue protein sequence, read N- to C-terminus: Probable endopolygalacturonase C (383 aa).

Positions 1–16 (MVRQLILISSLLAAVA) are cleaved as a signal peptide. Positions 17-40 (VRAPADPAHPMVTEAPDVNLVEKR) are excised as a propeptide. C44 and C62 are disulfide-bonded. PbH1 repeat units follow at residues 175–206 (STDLTMTDITVDNTDGDTDDLAANTDGFDIGE) and 207–228 (STYITITGAEIYNQDDCVAINS). D221 functions as the Proton donor in the catalytic mechanism. Cysteines 223 and 239 form a disulfide. Residue H243 is part of the active site. PbH1 repeat units lie at residues 253–279 (RDDNTVKNVTFYDVNVLKSQQAIRIKT) and 287–309 (VSEVTYHEIAFSDATDYGIVIEQ). An N-linked (GlcNAc...) asparagine glycan is attached at N260. Disulfide bonds link C348–C353 and C372–C381.

Belongs to the glycosyl hydrolase 28 family.

The protein localises to the secreted. The catalysed reaction is (1,4-alpha-D-galacturonosyl)n+m + H2O = (1,4-alpha-D-galacturonosyl)n + (1,4-alpha-D-galacturonosyl)m.. Its function is as follows. Involved in maceration and soft-rotting of plant tissue. Hydrolyzes the 1,4-alpha glycosidic bonds of de-esterified pectate in the smooth region of the plant cell wall. This Aspergillus niger protein is Probable endopolygalacturonase C (pgaC).